Here is a 309-residue protein sequence, read N- to C-terminus: Cytochrome c biogenesis protein CcsA (309 aa).

8 helical membrane-spanning segments follow: residues L18 to F38, L48 to S68, I73 to L93, I102 to L122, V148 to I168, S216 to N236, T250 to I267, and L279 to I299.

This sequence belongs to the CcmF/CycK/Ccl1/NrfE/CcsA family. May interact with ccs1.

It is found in the cellular thylakoid membrane. Functionally, required during biogenesis of c-type cytochromes (cytochrome c6 and cytochrome f) at the step of heme attachment. This is Cytochrome c biogenesis protein CcsA from Prochlorococcus marinus (strain AS9601).